The sequence spans 132 residues: Small ribosomal subunit protein uS8 (132 aa).

The protein belongs to the universal ribosomal protein uS8 family. In terms of assembly, part of the 30S ribosomal subunit. Contacts proteins S5 and S12.

In terms of biological role, one of the primary rRNA binding proteins, it binds directly to 16S rRNA central domain where it helps coordinate assembly of the platform of the 30S subunit. In Parvibaculum lavamentivorans (strain DS-1 / DSM 13023 / NCIMB 13966), this protein is Small ribosomal subunit protein uS8.